A 215-amino-acid polypeptide reads, in one-letter code: Large ribosomal subunit protein uL3 (215 aa).

A disordered region spans residues 136–155 (GVSISHRSHGSTGQRQDPGK). Q151 is modified (N5-methylglutamine).

The protein belongs to the universal ribosomal protein uL3 family. In terms of assembly, part of the 50S ribosomal subunit. Forms a cluster with proteins L14 and L19. In terms of processing, methylated by PrmB.

One of the primary rRNA binding proteins, it binds directly near the 3'-end of the 23S rRNA, where it nucleates assembly of the 50S subunit. In Rickettsia typhi (strain ATCC VR-144 / Wilmington), this protein is Large ribosomal subunit protein uL3.